We begin with the raw amino-acid sequence, 193 residues long: Alpha-S2-casein (193 aa).

An N-terminal signal peptide occupies residues 1 to 15 (MKFFIFTCLLAVVLA). Phosphoserine occurs at positions 23, 24, 25, 28, 47, 68, 123, 125, 128, and 136.

It belongs to the alpha-casein family. As to expression, mammary gland specific. Secreted in milk.

The protein localises to the secreted. Functionally, important role in the capacity of milk to transport calcium phosphate. In Camelus dromedarius (Dromedary), this protein is Alpha-S2-casein (CSN1S2).